The following is a 153-amino-acid chain: Bifunctional protein GAL10 (153 aa).

The segment at 1-153 is galactowaldenase; that stretch reads MSDDIFLVTG…IPIPEHCPME (153 aa).

The protein in the N-terminal section; belongs to the NAD(P)-dependent epimerase/dehydratase family. This sequence in the C-terminal section; belongs to the aldose epimerase family. The cofactor is NAD(+).

It catalyses the reaction UDP-alpha-D-glucose = UDP-alpha-D-galactose. The catalysed reaction is alpha-D-glucose = beta-D-glucose. Its pathway is carbohydrate metabolism; galactose metabolism. It functions in the pathway carbohydrate metabolism; hexose metabolism. Its function is as follows. Mutarotase converts alpha-aldose to the beta-anomer. It is active on D-glucose, L-arabinose, D-xylose, D-galactose, maltose and lactose. The chain is Bifunctional protein GAL10 (GAL10) from Candida maltosa (Yeast).